The following is a 286-amino-acid chain: Uridylate cyclase (286 aa).

The 134-residue stretch at 90–223 folds into the Guanylate cyclase domain; the sequence is TAIFVDIRKS…DAVTKAANMS (134 aa). Residue phenylalanine 93 coordinates a ribonucleoside 5'-triphosphate. 3 residues coordinate Mn(2+): aspartate 95, isoleucine 96, and aspartate 140.

This sequence belongs to the adenylyl cyclase class-4/guanylyl cyclase family. Pyrimidine cyclase subfamily. As to quaternary structure, homodimer. It depends on Mn(2+) as a cofactor.

It localises to the cytoplasm. The catalysed reaction is UTP = 3',5'-cyclic UMP + diphosphate. Pycsar (pyrimidine cyclase system for antiphage resistance) provides immunity against bacteriophage. The pyrimidine cyclase (PycC) synthesizes cyclic nucleotides in response to infection; these serve as specific second messenger signals. The signals activate the adjacent effector, leading to bacterial cell death and abortive phage infection. A clade C Pycsar system. Functionally, the pyrimidine cyclase gene of a two-gene Pycsar system, weakly generates cyclic UMP (cUMP) from UTP, has little to no activity on ATP, CTP or GTP. Expression of this and adjacent effector TpPycTM (AC A0A1T4LJG1) probably confers resistance to bacteriophage. The genes are probably only expressed in response to bacteriophage infection. The sequence is that of Uridylate cyclase from Treponema porcinum.